Here is a 377-residue protein sequence, read N- to C-terminus: 4-hydroxy-3-methylbut-2-en-1-yl diphosphate synthase (flavodoxin) (377 aa).

[4Fe-4S] cluster is bound by residues Cys-270, Cys-273, Cys-305, and Glu-312.

This sequence belongs to the IspG family. It depends on [4Fe-4S] cluster as a cofactor.

The enzyme catalyses (2E)-4-hydroxy-3-methylbut-2-enyl diphosphate + oxidized [flavodoxin] + H2O + 2 H(+) = 2-C-methyl-D-erythritol 2,4-cyclic diphosphate + reduced [flavodoxin]. It participates in isoprenoid biosynthesis; isopentenyl diphosphate biosynthesis via DXP pathway; isopentenyl diphosphate from 1-deoxy-D-xylulose 5-phosphate: step 5/6. Its function is as follows. Converts 2C-methyl-D-erythritol 2,4-cyclodiphosphate (ME-2,4cPP) into 1-hydroxy-2-methyl-2-(E)-butenyl 4-diphosphate. The polypeptide is 4-hydroxy-3-methylbut-2-en-1-yl diphosphate synthase (flavodoxin) (Bacillus subtilis (strain 168)).